Reading from the N-terminus, the 323-residue chain is Peridinin-chlorophyll a-binding protein 3 (323 aa).

2 consecutive repeat copies span residues 1 to 173 (DGIA…RYVP) and 174 to 323 (DGPV…SAVV).

In terms of assembly, homotrimer.

It localises to the plastid. It is found in the chloroplast. In terms of biological role, water-soluble antenna for capture of solar energy in the blue-green range. Peridinin is an asymmetric carotenoid. This is Peridinin-chlorophyll a-binding protein 3 from Amphidinium carterae (Dinoflagellate).